Here is a 233-residue protein sequence, read N- to C-terminus: Large ribosomal subunit protein uL1 (233 aa).

It belongs to the universal ribosomal protein uL1 family. As to quaternary structure, part of the 50S ribosomal subunit.

Functionally, binds directly to 23S rRNA. The L1 stalk is quite mobile in the ribosome, and is involved in E site tRNA release. In terms of biological role, protein L1 is also a translational repressor protein, it controls the translation of the L11 operon by binding to its mRNA. This chain is Large ribosomal subunit protein uL1, found in Photobacterium profundum (strain SS9).